The primary structure comprises 627 residues: tRNA uridine 5-carboxymethylaminomethyl modification enzyme MnmG (627 aa).

Residues 13 to 18, Val-125, and Ser-180 contribute to the FAD site; that span reads GGGHAG. 274-288 contacts NAD(+); that stretch reads GPRYCPSIEDKVVRF. Gln-371 is an FAD binding site.

Belongs to the MnmG family. In terms of assembly, homodimer. Heterotetramer of two MnmE and two MnmG subunits. It depends on FAD as a cofactor.

It localises to the cytoplasm. In terms of biological role, NAD-binding protein involved in the addition of a carboxymethylaminomethyl (cmnm) group at the wobble position (U34) of certain tRNAs, forming tRNA-cmnm(5)s(2)U34. The polypeptide is tRNA uridine 5-carboxymethylaminomethyl modification enzyme MnmG (Francisella tularensis subsp. holarctica (strain FTNF002-00 / FTA)).